The sequence spans 421 residues: Medium-chain specific acyl-CoA dehydrogenase, mitochondrial (421 aa).

Residues 1–25 constitute a mitochondrion transit peptide; it reads MAAAFRRGCRVLRSVSHFECRTQHS. N6-acetyllysine; alternate occurs at positions 30 and 69. Residues Lys30 and Lys69 each carry the N6-succinyllysine; alternate modification. Lys79 is modified (N6-acetyllysine). Residue 158 to 167 participates in FAD binding; sequence YCVTEPSAGS. Ser167 contacts octanoyl-CoA. The residue at position 179 (Lys179) is an N6-succinyllysine. 191-193 provides a ligand contact to FAD; the sequence is WIT. Lys212 is modified (N6-acetyllysine; alternate). Lys212 is subject to N6-succinyllysine; alternate. Residue Ser216 coordinates octanoyl-CoA. An N6-acetyllysine; alternate mark is found at Lys217, Lys235, Lys259, and Lys271. 4 positions are modified to N6-succinyllysine; alternate: Lys217, Lys235, Lys259, and Lys271. Octanoyl-CoA is bound by residues Asp278 and Arg281. Lys301 carries the N6-acetyllysine modification. FAD-binding positions include 306–308 and 316–317; these read RKT and HQ. Residues Arg349 and Thr351 each coordinate octanoyl-CoA. Position 351 is a phosphothreonine (Thr351). 374-378 is a binding site for FAD; sequence QIFGG. Glu401 contributes to the octanoyl-CoA binding site. The active-site Proton acceptor is the Glu401. 402–405 provides a ligand contact to FAD; the sequence is GTAQ.

This sequence belongs to the acyl-CoA dehydrogenase family. In terms of assembly, homotetramer. Interacts with the heterodimeric electron transfer flavoprotein ETF. FAD is required as a cofactor. Post-translationally, acetylated. Could occur at proximity of the cofactor-binding sites and reduce the catalytic activity. Could be deacetylated by SIRT3.

It is found in the mitochondrion matrix. The enzyme catalyses a medium-chain 2,3-saturated fatty acyl-CoA + oxidized [electron-transfer flavoprotein] + H(+) = a medium-chain (2E)-enoyl-CoA + reduced [electron-transfer flavoprotein]. It catalyses the reaction pentanoyl-CoA + oxidized [electron-transfer flavoprotein] + H(+) = (2E)-pentenoyl-CoA + reduced [electron-transfer flavoprotein]. It carries out the reaction hexanoyl-CoA + oxidized [electron-transfer flavoprotein] + H(+) = (2E)-hexenoyl-CoA + reduced [electron-transfer flavoprotein]. The catalysed reaction is octanoyl-CoA + oxidized [electron-transfer flavoprotein] + H(+) = (2E)-octenoyl-CoA + reduced [electron-transfer flavoprotein]. The enzyme catalyses decanoyl-CoA + oxidized [electron-transfer flavoprotein] + H(+) = (2E)-decenoyl-CoA + reduced [electron-transfer flavoprotein]. It catalyses the reaction dodecanoyl-CoA + oxidized [electron-transfer flavoprotein] + H(+) = (2E)-dodecenoyl-CoA + reduced [electron-transfer flavoprotein]. It carries out the reaction tetradecanoyl-CoA + oxidized [electron-transfer flavoprotein] + H(+) = (2E)-tetradecenoyl-CoA + reduced [electron-transfer flavoprotein]. The catalysed reaction is oxidized [electron-transfer flavoprotein] + hexadecanoyl-CoA + H(+) = (2E)-hexadecenoyl-CoA + reduced [electron-transfer flavoprotein]. Its pathway is lipid metabolism; mitochondrial fatty acid beta-oxidation. Functionally, medium-chain specific acyl-CoA dehydrogenase is one of the acyl-CoA dehydrogenases that catalyze the first step of mitochondrial fatty acid beta-oxidation, an aerobic process breaking down fatty acids into acetyl-CoA and allowing the production of energy from fats. The first step of fatty acid beta-oxidation consists in the removal of one hydrogen from C-2 and C-3 of the straight-chain fatty acyl-CoA thioester, resulting in the formation of trans-2-enoyl-CoA. Electron transfer flavoprotein (ETF) is the electron acceptor that transfers electrons to the main mitochondrial respiratory chain via ETF-ubiquinone oxidoreductase (ETF dehydrogenase). Among the different mitochondrial acyl-CoA dehydrogenases, medium-chain specific acyl-CoA dehydrogenase acts specifically on acyl-CoAs with saturated 6 to 12 carbons long primary chains. This Mus musculus (Mouse) protein is Medium-chain specific acyl-CoA dehydrogenase, mitochondrial.